Consider the following 1405-residue polypeptide: Rho guanine nucleotide exchange factor 18 (1405 aa).

3 disordered regions span residues 1–47 (MGSE…EDGF), 92–115 (ETHR…ALPQ), and 289–330 (PGKS…PGKR). Basic and acidic residues-rich tracts occupy residues 92-103 (ETHRQEARRESS) and 308-330 (RQKE…PGKR). The segment at 347–372 (SSCPLCGEPLLNSASLKEHPRTTLLS) adopts a C2H2-type; degenerate zinc-finger fold. Residues 485-682 (KRQDVLYELM…KDIISQVDAK (198 aa)) form the DH domain. The PH domain maps to 723–825 (QLHLEGALCW…WMAHIRRAVE (103 aa)). The disordered stretch occupies residues 936–1016 (QVEEGSVSAG…PQAVEMPSTE (81 aa)). A Phosphothreonine modification is found at Thr952. At Ser961 the chain carries Phosphoserine. Residues 1084–1181 (FEKQREERAG…RERLELLRRF (98 aa)) are a coiled coil. Disordered regions lie at residues 1198–1242 (EAQP…VERP), 1274–1309 (RQTA…WESS), and 1328–1405 (ESAS…VIFF). Ser1336 and Ser1338 each carry phosphoserine. The segment covering 1355–1365 (FPAPSPAPAAT) has biased composition (pro residues). Residues 1375–1394 (TSLPPVSPASSLPTTPLATT) show a composition bias toward low complexity. A compositionally biased stretch (basic and acidic residues) spans 1396 to 1405 (EVSKEDVIFF).

As to quaternary structure, interacts with SEPT9; interaction may inhibit GEF activity. Interacts with Gbetagamma subunits GNB1 and GNG2. Interacts with EPB41L4B. Interacts with PATJ (via C-terminus).

It is found in the cytoplasm. It localises to the cytoskeleton. Its subcellular location is the cell membrane. The protein resides in the apical cell membrane. Functionally, acts as a guanine nucleotide exchange factor (GEF) for RhoA GTPases. May play a role in actin cytoskeleton reorganization in different tissues since its activation induces formation of actin stress fibers. Also acts as a GEF for RAC1, inducing production of reactive oxygen species (ROS). Does not act as a GEF for CDC42. The G protein beta-gamma (Gbetagamma) subunits of heterotrimeric G proteins act as activators, explaining the integrated effects of LPA and other G-protein coupled receptor agonists on actin stress fiber formation, cell shape change and ROS production. Required for EPB41L4B-mediated regulation of the circumferential actomyosin belt in epithelial cells. In Mus musculus (Mouse), this protein is Rho guanine nucleotide exchange factor 18 (Arhgef18).